Here is a 314-residue protein sequence, read N- to C-terminus: uncharacterized protein (314 aa).

The tract at residues 1-71 is disordered; it reads MAGNSQRRGA…QRAGRKADET (71 aa). Gly-266, Ile-286, and Leu-295 together coordinate S-adenosyl-L-methionine.

The protein belongs to the class IV-like SAM-binding methyltransferase superfamily. RNA methyltransferase TrmH family.

This is an uncharacterized protein from Mycolicibacterium smegmatis (strain ATCC 700084 / mc(2)155) (Mycobacterium smegmatis).